The following is a 255-amino-acid chain: tRNA pseudouridine synthase A (255 aa).

The Nucleophile role is filled by Asp-52. Tyr-111 is a binding site for substrate.

Belongs to the tRNA pseudouridine synthase TruA family. In terms of assembly, homodimer.

It catalyses the reaction uridine(38/39/40) in tRNA = pseudouridine(38/39/40) in tRNA. Its function is as follows. Formation of pseudouridine at positions 38, 39 and 40 in the anticodon stem and loop of transfer RNAs. The protein is tRNA pseudouridine synthase A of Cereibacter sphaeroides (strain KD131 / KCTC 12085) (Rhodobacter sphaeroides).